The primary structure comprises 201 residues: Superoxide dismutase [Mn/Fe] (201 aa).

Fe(3+) contacts are provided by histidine 27, histidine 75, aspartate 161, and histidine 165. The Mn(2+) site is built by histidine 27, histidine 75, aspartate 161, and histidine 165.

The protein belongs to the iron/manganese superoxide dismutase family. As to quaternary structure, homotetramer. Mn(2+) serves as cofactor. Fe(3+) is required as a cofactor.

It carries out the reaction 2 superoxide + 2 H(+) = H2O2 + O2. With respect to regulation, shows decreasing activity with increasing pH. Slightly inhibited by azide and fluoride at pH 7-8; the inhibition is drastically increased towards lower pH. Destroys superoxide anion radicals which are normally produced within the cells and which are toxic to biological systems. Catalyzes the dismutation of superoxide anion radicals into O2 and H2O2 by successive reduction and oxidation of the transition metal ion at the active site. The sequence is that of Superoxide dismutase [Mn/Fe] (sodA) from Propionibacterium freudenreichii subsp. shermanii.